The sequence spans 909 residues: Protein NLP1 (909 aa).

Disordered regions lie at residues 51–71, 536–556, 568–605, and 690–745; these read KSLKQTEQSPSASTAMNDNSP, KEDPKELSSGRENSQLDPVPN, ASTPGLRVDIGPSTESASTGGGNMLSSRRPGEKKRAKT, and NSPN…ENTG. Residues 55 to 70 are compositionally biased toward polar residues; it reads QTEQSPSASTAMNDNS. The 82-residue stretch at 595–676 folds into the RWP-RK domain; it reads RRPGEKKRAK…MDSVQGAQGS (82 aa). The segment covering 690-716 has biased composition (polar residues); sequence NSPNMSSNGPSLKSNEQPSHLNAQTDN. Over residues 725–745 the composition is skewed to low complexity; that stretch reads RSPSSSCSKSSGSSNNNENTG. The PB1 domain occupies 811-894; sequence AIKVKATFGE…HTIKISLNEA (84 aa).

The protein localises to the nucleus. Probable transcription factor. This chain is Protein NLP1 (NLP1), found in Arabidopsis thaliana (Mouse-ear cress).